The following is a 514-amino-acid chain: Threonine synthase (514 aa).

Lys117 is modified (N6-(pyridoxal phosphate)lysine). 4 residues coordinate pyridoxal 5'-phosphate: Gly270, Asn271, Phe272, and Asp274. Ser319 and Ser321 each carry phosphoserine. Position 449 (Thr449) interacts with pyridoxal 5'-phosphate.

It belongs to the threonine synthase family. Requires pyridoxal 5'-phosphate as cofactor.

It catalyses the reaction O-phospho-L-homoserine + H2O = L-threonine + phosphate. It functions in the pathway amino-acid biosynthesis; L-threonine biosynthesis; L-threonine from L-aspartate: step 5/5. In terms of biological role, catalyzes the gamma-elimination of phosphate from L-phosphohomoserine and the beta-addition of water to produce L-threonine. The polypeptide is Threonine synthase (thrc) (Schizosaccharomyces pombe (strain 972 / ATCC 24843) (Fission yeast)).